The primary structure comprises 419 residues: Thymidine phosphorylase (419 aa).

It belongs to the thymidine/pyrimidine-nucleoside phosphorylase family. As to quaternary structure, homodimer.

It catalyses the reaction thymidine + phosphate = 2-deoxy-alpha-D-ribose 1-phosphate + thymine. Its function is as follows. The enzymes which catalyze the reversible phosphorolysis of pyrimidine nucleosides are involved in the degradation of these compounds and in their utilization as carbon and energy sources, or in the rescue of pyrimidine bases for nucleotide synthesis. This is Thymidine phosphorylase (deoA) from Mycoplasmoides pirum (Mycoplasma pirum).